The primary structure comprises 434 residues: uncharacterized protein (434 aa).

Lys216 bears the N6-(pyridoxal phosphate)lysine mark.

This is an uncharacterized protein from Schizosaccharomyces pombe (strain 972 / ATCC 24843) (Fission yeast).